The chain runs to 130 residues: Universal stress protein MSMEG_4207 (130 aa).

Position 104 is an N6-acetyllysine (Lys-104).

It belongs to the universal stress protein A family. In terms of processing, acetylated on Lys-104 by PatA in the presence of acetyl-CoA as an acetyl donor.

The polypeptide is Universal stress protein MSMEG_4207 (Mycolicibacterium smegmatis (strain ATCC 700084 / mc(2)155) (Mycobacterium smegmatis)).